The following is a 137-amino-acid chain: ATP synthase epsilon chain, sodium ion specific (137 aa).

This sequence belongs to the ATPase epsilon chain family. In terms of assembly, F-type ATPases have 2 components, CF(1) - the catalytic core - and CF(0) - the membrane proton channel. CF(1) has five subunits: alpha(3), beta(3), gamma(1), delta(1), epsilon(1). CF(0) has three main subunits: a, b and c.

It is found in the cell inner membrane. Functionally, produces ATP from ADP in the presence of a sodium gradient across the membrane. This chain is ATP synthase epsilon chain, sodium ion specific (atpC), found in Propionigenium modestum.